Consider the following 316-residue polypeptide: Ribosomal RNA small subunit methyltransferase H (316 aa).

S-adenosyl-L-methionine contacts are provided by residues 35-37 (GGH), Asp55, Phe79, Asp101, and Gln108.

Belongs to the methyltransferase superfamily. RsmH family.

It localises to the cytoplasm. It carries out the reaction cytidine(1402) in 16S rRNA + S-adenosyl-L-methionine = N(4)-methylcytidine(1402) in 16S rRNA + S-adenosyl-L-homocysteine + H(+). In terms of biological role, specifically methylates the N4 position of cytidine in position 1402 (C1402) of 16S rRNA. This Aliivibrio salmonicida (strain LFI1238) (Vibrio salmonicida (strain LFI1238)) protein is Ribosomal RNA small subunit methyltransferase H.